Reading from the N-terminus, the 229-residue chain is 7-cyano-7-deazaguanine synthase (229 aa).

Residue 8–18 (FSGGQDSTTCL) participates in ATP binding. Residues C186, C195, C198, and C201 each contribute to the Zn(2+) site.

The protein belongs to the QueC family. The cofactor is Zn(2+).

It catalyses the reaction 7-carboxy-7-deazaguanine + NH4(+) + ATP = 7-cyano-7-deazaguanine + ADP + phosphate + H2O + H(+). Its pathway is purine metabolism; 7-cyano-7-deazaguanine biosynthesis. Catalyzes the ATP-dependent conversion of 7-carboxy-7-deazaguanine (CDG) to 7-cyano-7-deazaguanine (preQ(0)). The protein is 7-cyano-7-deazaguanine synthase of Edwardsiella ictaluri (strain 93-146).